We begin with the raw amino-acid sequence, 79 residues long: U-scoloptoxin(15)-Sm1a (79 aa).

Positions 1–25 (MKMNVVVLSVVVLLLFIANIQQTEA) are cleaved as a signal peptide.

This sequence belongs to the scoloptoxin-15 family. Post-translationally, contains 2 disulfide bonds. As to expression, expressed by the venom gland.

It is found in the secreted. The chain is U-scoloptoxin(15)-Sm1a from Scolopendra morsitans (Tanzanian blue ringleg centipede).